The following is a 279-amino-acid chain: NH(3)-dependent NAD(+) synthetase (279 aa).

ATP is bound at residue 46–53 (GISGGQDS). Aspartate 52 lines the Mg(2+) pocket. Arginine 145 lines the deamido-NAD(+) pocket. Threonine 165 lines the ATP pocket. Residue glutamate 170 participates in Mg(2+) binding. Residues lysine 178 and aspartate 185 each coordinate deamido-NAD(+). ATP contacts are provided by lysine 194 and threonine 216. 265–266 (HK) lines the deamido-NAD(+) pocket.

This sequence belongs to the NAD synthetase family. Homodimer.

It catalyses the reaction deamido-NAD(+) + NH4(+) + ATP = AMP + diphosphate + NAD(+) + H(+). It functions in the pathway cofactor biosynthesis; NAD(+) biosynthesis; NAD(+) from deamido-NAD(+) (ammonia route): step 1/1. Functionally, catalyzes the ATP-dependent amidation of deamido-NAD to form NAD. Uses ammonia as a nitrogen source. The chain is NH(3)-dependent NAD(+) synthetase from Rhodococcus opacus (strain B4).